A 502-amino-acid chain; its full sequence is Rab11 family-interacting protein 4B (502 aa).

Disordered stretches follow at residues 1 to 49 and 71 to 98; these read MSIQ…EEGI and SALSSASLNEEQFEDYGEGEDGDCTTSS. Over residues 15 to 29 the composition is skewed to basic and acidic residues; that stretch reads EEGRGVERDSDRDSA. A compositionally biased stretch (polar residues) spans 71-80; it reads SALSSASLNE. Positions 81–93 are enriched in acidic residues; the sequence is EQFEDYGEGEDGD. The stretch at 228 to 482 forms a coiled coil; that stretch reads DVKTKLKQEN…EEINLRLRQY (255 aa). The FIP-RBD domain maps to 439–501; sequence EAKNLFATQT…DHNPSILEIK (63 aa).

Homodimer. Forms a complex with Rab11 (rab11a or rab11b) and arf6.

The protein resides in the recycling endosome membrane. The protein localises to the cleavage furrow. It localises to the midbody. Its subcellular location is the cytoplasmic vesicle. Its function is as follows. Acts as a regulator of endocytic traffic by participating in membrane delivery. Required for the abscission step in cytokinesis, possibly by acting as an 'address tag' delivering recycling endosome membranes to the cleavage furrow during late cytokinesis. This chain is Rab11 family-interacting protein 4B (rab11fip4b), found in Danio rerio (Zebrafish).